A 1489-amino-acid chain; its full sequence is Type-2 histone deacetylase 1 (1489 aa).

Composition is skewed to low complexity over residues 135-163 (NNNNINNNNNSNGSNSSNNSHNGGSSPSG), 190-259 (SNGN…SRNL), 281-306 (NIINNNSNNNTNNNNNIMNGTTTSTT), and 325-399 (SPTS…NINN). 5 disordered regions span residues 135–259 (NNNN…SRNL), 281–556 (NIIN…NYQQ), 915–935 (NNNNNNNNNNNNNNNEEDDQL), 955–1024 (NISK…RDRD), and 1151–1185 (STGINQFSTSTPITTTGTATVTPGSTTSSTNGEQC). A compositionally biased stretch (polar residues) spans 400–430 (VANGTPRPSLQTSRLQGKLPSPQQYNTSPSH). Composition is skewed to low complexity over residues 431-450 (QQYPSPKNNNNSNNIIPIQS), 486-553 (NNNN…NNSN), 915-928 (NNNNNNNNNNNNNN), and 959-988 (NNNNNNNNNNNNNNNNNNNNNNNNNNNNNN). Composition is skewed to basic and acidic residues over residues 989–1001 (RNRDRDREFERDN) and 1010–1024 (IEKERNRNNRIRDRD). The span at 1158-1180 (STSTPITTTGTATVTPGSTTSST) shows a compositional bias: low complexity. H1232 functions as the Proton acceptor in the catalytic mechanism. Positions 1325 to 1335 (EQNDYDDDDNN) are enriched in acidic residues. A disordered region spans residues 1325–1374 (EQNDYDDDDNNNDVNNNNNNNNNNNNNNNNNNNNKNNNNNNSNSITQQST). A compositionally biased stretch (low complexity) spans 1336 to 1367 (NDVNNNNNNNNNNNNNNNNNNNNKNNNNNNSN).

Belongs to the histone deacetylase family. HD type 2 subfamily.

It localises to the nucleus. Its subcellular location is the cytoplasm. It carries out the reaction N(6)-acetyl-L-lysyl-[histone] + H2O = L-lysyl-[histone] + acetate. Functionally, responsible for the deacetylation of lysine residues on the N-terminal part of the core histones (H2A, H2B, H3 and H4). Histone deacetylation plays an important role in transcriptional regulation, cell cycle progression and developmental events. Histone deacetylases act via the formation of large multiprotein complexes. The polypeptide is Type-2 histone deacetylase 1 (hdaD) (Dictyostelium discoideum (Social amoeba)).